A 202-amino-acid chain; its full sequence is Stress enhanced protein 2, chloroplastic (202 aa).

The transit peptide at methionine 1 to tyrosine 60 directs the protein to the chloroplast. 2 helical membrane passes run leucine 111 to phenylalanine 131 and alanine 142 to serine 162.

Belongs to the ELIP/psbS family.

The protein localises to the plastid. It is found in the chloroplast thylakoid membrane. In terms of biological role, may be involved in non-photochemical quenching, a process that maintains the balance between dissipation and utilization of light energy to minimize generation of oxidizing molecules, thereby protecting the plant against photo-oxidative damage. May play a photoprotective role in the thylakoid membrane in response to light stress. This chain is Stress enhanced protein 2, chloroplastic, found in Arabidopsis thaliana (Mouse-ear cress).